A 1481-amino-acid polypeptide reads, in one-letter code: Cystic fibrosis transmembrane conductance regulator (1481 aa).

Residues 1 to 77 (MQRSPLEKAS…KLINALRRCF (77 aa)) lie on the Cytoplasmic side of the membrane. A helical transmembrane segment spans residues 78 to 98 (FWRFMFYGILLYLGEVTKAVQ). Residues 81-365 (FMFYGILLYL…WAVQTWYDSL (285 aa)) form the ABC transmembrane type-1 1 domain. At 99 to 122 (PLLLGRIIASYDPDNKEERSIAIY) the chain is on the extracellular side. The helical transmembrane segment at 123–146 (LGIGLCLLFIVRTLLLHPAIFGLH) threads the bilayer. Residues 147–195 (HIGMQMRIAMFSLIYKKTLKLSSRVLDKISIGQLVSLLSNNLNKFDEGL) lie on the Cytoplasmic side of the membrane. A helical membrane pass occupies residues 196-216 (ALAHFVWIVPLQVALLMGLIW). Residues 217–222 (ELLQAS) lie on the Extracellular side of the membrane. The chain crosses the membrane as a helical span at residues 223–243 (AFCGLGFLIVLALFQAGLGRM). The Cytoplasmic portion of the chain corresponds to 244–298 (MMKYRDQRAGKINERLVITSEMIENIQSVKAYCWEEAMEKMIENLRQTELKLTRK). A helical transmembrane segment spans residues 299–319 (AAYVRYFNSSAFFFSGFFVVF). Topologically, residues 320–339 (LSVLPYALIKGIVLRKIFTT) are extracellular. Residues 340–358 (ISFCIVLRMAVTRQFPWAV) form a helical membrane-spanning segment. Residues 359–858 (QTWYDSLGAI…YLRYITVHKS (500 aa)) are Cytoplasmic-facing. ATP contacts are provided by residues Trp401, Ser434, 458 to 465 (GSTGAGKT), and Gln493. An ABC transporter 1 domain is found at 423–646 (NDDDSLFFSN…RPDFSSKLMG (224 aa)). Cys524 is lipidated: S-palmitoyl cysteine. Phosphoserine occurs at positions 549 and 660. The disordered R region stretch occupies residues 654-831 (SAERRNSILT…EEINEEDLKE (178 aa)). Ser670 carries the phosphoserine; by PKA modification. Phosphoserine is present on Ser686. Lys688 participates in a covalent cross-link: Glycyl lysine isopeptide (Lys-Gly) (interchain with G-Cter in ubiquitin). A phosphoserine mark is found at Ser700 and Ser712. Thr717 carries the post-translational modification Phosphothreonine. Ser737, Ser753, Ser768, Ser790, Ser795, and Ser813 each carry phosphoserine. A helical membrane pass occupies residues 859-879 (LIFVLIWCLVIFLAEVAASLV). In terms of domain architecture, ABC transmembrane type-1 2 spans 859-1155 (LIFVLIWCLV…AVNSSIDVDS (297 aa)). Over 880–918 (VLWFLGNTPPQDKGNSTYSRNNSYAVIITRTSSYYVFYI) the chain is Extracellular. N-linked (GlcNAc...) asparagine glycans are attached at residues Asn894 and Asn900. The chain crosses the membrane as a discontinuously helical span at residues 919–939 (YVGVADTLLAMGFFRGLPLVH). Residues 940 to 990 (TLITVSKILHHKMLHSVLQAPMSTLNTLKAGGILNRFSKDIAILDDLLPLT) are Cytoplasmic-facing. Residues 991 to 1011 (IFDFIQLLLIVIGAIAVVAVL) form a helical membrane-spanning segment. At 1012 to 1013 (QP) the chain is on the extracellular side. The chain crosses the membrane as a helical span at residues 1014–1034 (YIFVATVPVIVAFIMLRAYFL). The Cytoplasmic portion of the chain corresponds to 1035 to 1095 (QTSQQLKQLE…TANWFLYLST (61 aa)). Residues 1096–1116 (LRWFQMRIEMIFVIFFIAVTF) traverse the membrane as a helical segment. Over 1117 to 1130 (ISILTTGEGEGTVG) the chain is Extracellular. Residues 1131–1151 (IILTLAMNIMSTLQWAVNSSI) traverse the membrane as a helical segment. The Cytoplasmic portion of the chain corresponds to 1152–1481 (DVDSLMRSVS…TEEEVQDTRL (330 aa)). Residues 1211–1444 (MTVKDLTAKY…RSLFRQAISP (234 aa)) enclose the ABC transporter 2 domain. ATP contacts are provided by residues Tyr1220 and 1245–1252 (GRTGSGKS). The interval 1387-1481 (RTLKQAFADC…TEEEVQDTRL (95 aa)) is interaction with GORASP2. Cys1396 carries the S-palmitoyl cysteine lipid modification. Ser1445 and Ser1457 each carry phosphoserine. A disordered region spans residues 1462–1481 (QPQIAALKEETEEEVQDTRL). Residues 1471-1481 (ETEEEVQDTRL) are compositionally biased toward acidic residues. Residues 1479–1481 (TRL) carry the PDZ-binding motif.

The protein belongs to the ABC transporter superfamily. ABCC family. CFTR transporter (TC 3.A.1.202) subfamily. As to quaternary structure, monomer; does not require oligomerization for channel activity. May form oligomers in the membrane. Interacts with SLC26A3, SLC26A6 and NHERF1. Interacts with SHANK2. Interacts with MYO6. Interacts (via C-terminus) with GOPC (via PDZ domain); this promotes CFTR internalization and thereby decreases channel activity. Interacts with SLC4A7 through NHERF1. Found in a complex with MYO5B and RAB11A. Interacts with ANO1. Interacts with SLC26A8. Interacts with AHCYL1; the interaction increases CFTR activity. Interacts with CSE1L. The core-glycosylated form interacts with GORASP2 (via PDZ GRASP-type 1 domain) in respone to ER stress. Interacts with MARCHF2; the interaction leads to CFTR ubiqtuitination and degradation. Interacts with ADGRG2. N-glycosylated. Post-translationally, phosphorylated; cAMP treatment promotes phosphorylation and activates the channel. Dephosphorylation decreases the ATPase activity (in vitro). Phosphorylation at PKA sites activates the channel. Phosphorylation at PKC sites enhances the response to phosphorylation by PKA. Phosphorylated by AMPK; this inhibits channel activity. In terms of processing, ubiquitinated, leading to its degradation in the lysosome. Deubiquitination by USP10 in early endosomes enhances its endocytic recycling to the cell membrane. Ubiquitinated by RNF185 during ER stress. Ubiquitinated by MARCHF2.

Its subcellular location is the apical cell membrane. The protein resides in the early endosome membrane. It is found in the cell membrane. The protein localises to the recycling endosome membrane. It localises to the endoplasmic reticulum membrane. Its subcellular location is the nucleus. The enzyme catalyses ATP + H2O + closed Cl(-) channel = ADP + phosphate + open Cl(-) channel.. The catalysed reaction is chloride(in) = chloride(out). It carries out the reaction hydrogencarbonate(in) = hydrogencarbonate(out). It catalyses the reaction ATP + H2O = ADP + phosphate + H(+). Its function is as follows. Epithelial ion channel that plays an important role in the regulation of epithelial ion and water transport and fluid homeostasis. Mediates the transport of chloride ions across the cell membrane. Possesses an intrinsic ATPase activity and utilizes ATP to gate its channel; the passive flow of anions through the channel is gated by cycles of ATP binding and hydrolysis by the ATP-binding domains. The ion channel is also permeable to HCO(3)(-); selectivity depends on the extracellular chloride concentration. Exerts its function also by modulating the activity of other ion channels and transporters. Contributes to the regulation of the pH and the ion content of the epithelial fluid layer. Modulates the activity of the epithelial sodium channel (ENaC) complex, in part by regulating the cell surface expression of the ENaC complex. May regulate bicarbonate secretion and salvage in epithelial cells by regulating the transporter SLC4A7. Can inhibit the chloride channel activity of ANO1. Plays a role in the chloride and bicarbonate homeostasis during sperm epididymal maturation and capacitation. The polypeptide is Cystic fibrosis transmembrane conductance regulator (Chlorocebus aethiops (Green monkey)).